Here is a 38-residue protein sequence, read N- to C-terminus: Photosystem I reaction center subunit VIII (38 aa).

Residues 12-32 form a helical membrane-spanning segment; the sequence is WILIPIIGWLMPAVVMGLLFL.

Belongs to the PsaI family.

The protein resides in the cellular thylakoid membrane. Its function is as follows. May help in the organization of the PsaL subunit. This Gloeothece citriformis (strain PCC 7424) (Cyanothece sp. (strain PCC 7424)) protein is Photosystem I reaction center subunit VIII.